The primary structure comprises 219 residues: Ras-related protein Rab-3B (219 aa).

Alanine 2 bears the N-acetylalanine mark. Serine 31, serine 32, valine 33, glycine 34, lysine 35, threonine 36, serine 37, proline 49, and serine 53 together coordinate GTP. Threonine 36 contributes to the Mg(2+) binding site. The Switch 1 signature appears at 45-58 (DTFTPAFVSTVGID). Mg(2+)-binding residues include threonine 54 and aspartate 77. The Switch 2 motif lies at 78–96 (TAGQERYRTITTAYYRGAM). Glycine 80 lines the GTP pocket. At threonine 86 the chain carries Phosphothreonine; by LRRK2. The GTP site is built by asparagine 135, lysine 136, aspartate 138, alanine 166, and lysine 167. Residues serine 188 and serine 190 each carry the phosphoserine modification. 2 S-geranylgeranyl cysteine lipidation sites follow: cysteine 217 and cysteine 219. At cysteine 219 the chain carries Cysteine methyl ester.

It belongs to the small GTPase superfamily. Rab family. In terms of assembly, interacts with RIMS1, RIMS2, RPH3A and RPH3AL. The GTP-bound form interacts with GAS8/DRC4 (via coiled-coil domains). Interacts with GDI2, CHM and CHML; phosphorylation at Thr-86 disrupts these interactions. Interacts with MADD (via uDENN domain); the GTP-bound form is preferred for interaction. The cofactor is Mg(2+). Post-translationally, phosphorylation of Thr-86 in the switch II region by LRRK2 prevents the association of RAB regulatory proteins, including CHM, CHML and RAB GDP dissociation inhibitor GDI2. Abundantly expressed in testis, lung and brain.

The protein resides in the cell membrane. Its subcellular location is the golgi apparatus. The catalysed reaction is GTP + H2O = GDP + phosphate + H(+). With respect to regulation, regulated by guanine nucleotide exchange factors (GEFs) which promote the exchange of bound GDP for free GTP. Regulated by GTPase activating proteins (GAPs) which increase the GTP hydrolysis activity. Inhibited by GDP dissociation inhibitors (GDIs) which prevent Rab-GDP dissociation. In terms of biological role, the small GTPases Rab are key regulators of intracellular membrane trafficking, from the formation of transport vesicles to their fusion with membranes. Rabs cycle between an inactive GDP-bound form and an active GTP-bound form that is able to recruit to membranes different sets of downstream effectors directly responsible for vesicle formation, movement, tethering and fusion. The protein is Ras-related protein Rab-3B of Mus musculus (Mouse).